The sequence spans 335 residues: Protease HtpX homolog (335 aa).

Transmembrane regions (helical) follow at residues 9–29 (VYMM…STIA), 42–62 (LFTS…AIIY), and 64–84 (ILAY…LLII). H168 provides a ligand contact to Zn(2+). The active site involves E169. A Zn(2+)-binding site is contributed by H172. 2 consecutive transmembrane segments (helical) span residues 179–199 (AVML…YALL) and 213–233 (AAIG…VLAF). Residue E238 coordinates Zn(2+).

The protein belongs to the peptidase M48B family. The cofactor is Zn(2+).

It localises to the cell membrane. The protein is Protease HtpX homolog of Archaeoglobus fulgidus (strain ATCC 49558 / DSM 4304 / JCM 9628 / NBRC 100126 / VC-16).